A 208-amino-acid polypeptide reads, in one-letter code: Redox-sensing transcriptional repressor Rex (208 aa).

The H-T-H motif DNA-binding region spans L16–F55. NAD(+) is bound at residue G90–G95.

The protein belongs to the transcriptional regulatory Rex family. Homodimer.

The protein resides in the cytoplasm. Functionally, modulates transcription in response to changes in cellular NADH/NAD(+) redox state. This Pediococcus pentosaceus (strain ATCC 25745 / CCUG 21536 / LMG 10740 / 183-1w) protein is Redox-sensing transcriptional repressor Rex.